Here is a 321-residue protein sequence, read N- to C-terminus: Nacrein-like protein (321 aa).

The 319-residue stretch at 1 to 319 (RGPKNWCKVH…NKNVIVYRNH (319 aa)) folds into the Alpha-carbonic anhydrase domain. Catalysis depends on His-58, which acts as the Proton acceptor.

The protein belongs to the alpha-carbonic anhydrase family. As to expression, component of the organic matrix of calcified shell layers like nacre and prisms.

The protein localises to the secreted. The sequence is that of Nacrein-like protein from Mytilus californianus (California mussel).